The following is a 538-amino-acid chain: Bifunctional purine biosynthesis protein PurH (538 aa).

An MGS-like domain is found at 6-158 (KHIPAPDLHR…KNHAYVATVV (153 aa)).

Belongs to the PurH family.

The catalysed reaction is (6R)-10-formyltetrahydrofolate + 5-amino-1-(5-phospho-beta-D-ribosyl)imidazole-4-carboxamide = 5-formamido-1-(5-phospho-D-ribosyl)imidazole-4-carboxamide + (6S)-5,6,7,8-tetrahydrofolate. The enzyme catalyses IMP + H2O = 5-formamido-1-(5-phospho-D-ribosyl)imidazole-4-carboxamide. Its pathway is purine metabolism; IMP biosynthesis via de novo pathway; 5-formamido-1-(5-phospho-D-ribosyl)imidazole-4-carboxamide from 5-amino-1-(5-phospho-D-ribosyl)imidazole-4-carboxamide (10-formyl THF route): step 1/1. It functions in the pathway purine metabolism; IMP biosynthesis via de novo pathway; IMP from 5-formamido-1-(5-phospho-D-ribosyl)imidazole-4-carboxamide: step 1/1. The chain is Bifunctional purine biosynthesis protein PurH from Brucella anthropi (strain ATCC 49188 / DSM 6882 / CCUG 24695 / JCM 21032 / LMG 3331 / NBRC 15819 / NCTC 12168 / Alc 37) (Ochrobactrum anthropi).